Reading from the N-terminus, the 199-residue chain is Mediator of RNA polymerase II transcription subunit 29 (199 aa).

Low complexity predominate over residues 1–17 (MAAPQPQAAAVSSASGV). Residues 1–47 (MAAPQPQAAAVSSASGVSGPGSAGGPGPQQQPQPTQLVGSAQSGLLQ) are disordered. An N-acetylalanine modification is found at Ala-2. The segment covering 18-27 (SGPGSAGGPG) has biased composition (gly residues). The segment covering 28 to 47 (PQQQPQPTQLVGSAQSGLLQ) has biased composition (low complexity).

Belongs to the Mediator complex subunit 29 family. Component of the Mediator complex, which is composed of MED1, MED4, MED6, MED7, MED8, MED9, MED10, MED11, MED12, MED13, MED13L, MED14, MED15, MED16, MED17, MED18, MED19, MED20, MED21, MED22, MED23, MED24, MED25, MED26, MED27, MED29, MED30, MED31, CCNC, CDK8 and CDC2L6/CDK11. The MED12, MED13, CCNC and CDK8 subunits form a distinct module termed the CDK8 module. Mediator containing the CDK8 module is less active than Mediator lacking this module in supporting transcriptional activation. Individual preparations of the Mediator complex lacking one or more distinct subunits have been variously termed ARC, CRSP, DRIP, PC2, SMCC and TRAP. Associates with the MED18/MED20 heteromer.

The protein localises to the nucleus. In terms of biological role, component of the Mediator complex, a coactivator involved in the regulated transcription of nearly all RNA polymerase II-dependent genes. Mediator functions as a bridge to convey information from gene-specific regulatory proteins to the basal RNA polymerase II transcription machinery. Mediator is recruited to promoters by direct interactions with regulatory proteins and serves as a scaffold for the assembly of a functional preinitiation complex with RNA polymerase II and the general transcription factors. In Mus musculus (Mouse), this protein is Mediator of RNA polymerase II transcription subunit 29 (Med29).